Here is a 115-residue protein sequence, read N- to C-terminus: Ribonuclease P protein component (115 aa).

It belongs to the RnpA family. As to quaternary structure, consists of a catalytic RNA component (M1 or rnpB) and a protein subunit.

The enzyme catalyses Endonucleolytic cleavage of RNA, removing 5'-extranucleotides from tRNA precursor.. Its function is as follows. RNaseP catalyzes the removal of the 5'-leader sequence from pre-tRNA to produce the mature 5'-terminus. It can also cleave other RNA substrates such as 4.5S RNA. The protein component plays an auxiliary but essential role in vivo by binding to the 5'-leader sequence and broadening the substrate specificity of the ribozyme. The sequence is that of Ribonuclease P protein component from Phytoplasma australiense.